We begin with the raw amino-acid sequence, 764 residues long: Protein translocase subunit SecA 2 (764 aa).

ATP-binding positions include Q83, 101 to 105, and D490; that span reads GEGKT.

This sequence belongs to the SecA family. As to quaternary structure, monomer and homodimer. Part of the essential Sec protein translocation apparatus which comprises SecA, SecYEG and auxiliary proteins SecDF. Other proteins may also be involved.

The protein resides in the cell membrane. The protein localises to the cytoplasm. The enzyme catalyses ATP + H2O + cellular proteinSide 1 = ADP + phosphate + cellular proteinSide 2.. Its function is as follows. Part of the Sec protein translocase complex. Interacts with the SecYEG preprotein conducting channel. Has a central role in coupling the hydrolysis of ATP to the transfer of proteins into and across the cell membrane, serving as an ATP-driven molecular motor driving the stepwise translocation of polypeptide chains across the membrane. The protein is Protein translocase subunit SecA 2 of Corynebacterium diphtheriae (strain ATCC 700971 / NCTC 13129 / Biotype gravis).